The following is a 341-amino-acid chain: L-threonine 3-dehydrogenase (341 aa).

Residue Cys38 coordinates Zn(2+). Catalysis depends on charge relay system residues Thr40 and His43. Residues His63, Glu64, Cys93, Cys96, Cys99, and Cys107 each contribute to the Zn(2+) site. NAD(+) is bound by residues Ile175, Asp195, Arg200, 262–264, and 286–287; these read LGI and IY.

The protein belongs to the zinc-containing alcohol dehydrogenase family. In terms of assembly, homotetramer. The cofactor is Zn(2+).

Its subcellular location is the cytoplasm. It catalyses the reaction L-threonine + NAD(+) = (2S)-2-amino-3-oxobutanoate + NADH + H(+). The protein operates within amino-acid degradation; L-threonine degradation via oxydo-reductase pathway; glycine from L-threonine: step 1/2. In terms of biological role, catalyzes the NAD(+)-dependent oxidation of L-threonine to 2-amino-3-ketobutyrate. The protein is L-threonine 3-dehydrogenase of Shewanella sp. (strain MR-7).